A 676-amino-acid chain; its full sequence is Protein kinase C delta type (676 aa).

In terms of domain architecture, C2 spans 1-106 (MAPFLRIAFN…KNNGKAEFWL (106 aa)). Phosphothreonine is present on residues threonine 43 and threonine 50. Tyrosine 64 carries the post-translational modification Phosphotyrosine. Serine 130 bears the Phosphoserine mark. The residue at position 141 (threonine 141) is a Phosphothreonine. Tyrosine 155 is subject to Phosphotyrosine. The Phorbol-ester/DAG-type 1 zinc-finger motif lies at 158 to 208 (NHEFIATFFGQPTFCSVCKDFVWGLNKQGYKCRQCNAAIHKKCIDKIIGRC). Threonine 218 is modified (phosphothreonine). A Phorbol-ester/DAG-type 2 zinc finger spans residues 230–280 (PHRFKVHNYMSPTFCDHCGSLLWGLVKQGLKCEDCGMNVHHKCREKVANLC). 3 positions are modified to phosphoserine; by autocatalysis: serine 299, serine 302, and serine 304. Serine 307 is subject to Phosphoserine. Phosphotyrosine is present on tyrosine 313. At tyrosine 334 the chain carries Phosphotyrosine; by SRC. A Protein kinase domain is found at 349–603 (FIFHKVLGKG…TGNIKIHPFF (255 aa)). 355 to 363 (LGKGSFGKV) contributes to the ATP binding site. At tyrosine 374 the chain carries Phosphotyrosine. Lysine 378 contributes to the ATP binding site. Residue threonine 451 is modified to Phosphothreonine. The Proton acceptor role is filled by aspartate 473. Phosphoserine is present on residues serine 503 and serine 506. Position 507 is a phosphothreonine; by autocatalysis (threonine 507). The residue at position 567 (tyrosine 567) is a Phosphotyrosine. In terms of domain architecture, AGC-kinase C-terminal spans 604-675 (KTINWTLLEK…VNPKFEHLLE (72 aa)). Serine 645, serine 654, serine 658, and serine 664 each carry phosphoserine.

It belongs to the protein kinase superfamily. AGC Ser/Thr protein kinase family. PKC subfamily. In terms of assembly, interacts with PDPK1 (via N-terminal region). Interacts with RAD9A. Interacts with CDCP1. Interacts with MUC1. Interacts with VASP. Interacts with CAVIN3. Interacts with PRKD2 (via N-terminus and zing-finger domain 1 and 2) in response to oxidative stress; the interaction is independent of PRKD2 tyrosine phosphorylation. Interacts with PLSC3; interaction is enhanced by UV irradiation. Interacts with PRKCH upstream open reading frame 2; the interaction leads to inhibition of kinase activity. Autophosphorylated and/or phosphorylated at Thr-507, within the activation loop; phosphorylation at Thr-507 is not a prerequisite for enzymatic activity. Autophosphorylated at Ser-299, Ser-302 and Ser-304. Upon TNFSF10/TRAIL treatment, phosphorylated at Tyr-155; phosphorylation is required for its translocation to the endoplasmic reticulum and cleavage by caspase-3. Phosphorylated at Tyr-313, Tyr-334 and Tyr-567; phosphorylation of Tyr-313 and Tyr-567 following thrombin or zymosan stimulation potentiates its kinase activity. Phosphorylated by protein kinase PDPK1; phosphorylation is inhibited by the apoptotic C-terminal cleavage product of PKN2. Phosphorylated at Tyr-313 through a SYK and SRC mechanism downstream of C-type lectin receptors activation, promoting its activation. Post-translationally, proteolytically cleaved into a catalytic subunit and a regulatory subunit by caspase-3 during apoptosis which results in kinase activation.

Its subcellular location is the cytoplasm. The protein localises to the perinuclear region. It is found in the nucleus. The protein resides in the cell membrane. It localises to the mitochondrion. Its subcellular location is the endomembrane system. It carries out the reaction L-seryl-[protein] + ATP = O-phospho-L-seryl-[protein] + ADP + H(+). It catalyses the reaction L-threonyl-[protein] + ATP = O-phospho-L-threonyl-[protein] + ADP + H(+). The enzyme catalyses L-tyrosyl-[protein] + ATP = O-phospho-L-tyrosyl-[protein] + ADP + H(+). Its activity is regulated as follows. Novel PKCs (PRKCD, PRKCE, PRKCH and PRKCQ) are calcium-insensitive, but activated by diacylglycerol (DAG) and phosphatidylserine. Three specific sites; Thr-507 (activation loop of the kinase domain), Ser-645 (turn motif) and Ser-664 (hydrophobic region), need to be phosphorylated for its full activation. Activated by caspase-3 (CASP3) cleavage during apoptosis. After cleavage, the pseudosubstrate motif in the regulatory subunit is released from the substrate recognition site of the catalytic subunit, which enables PRKCD to become constitutively activated. The catalytic subunit which displays properties of a sphingosine-dependent protein kinase is activated by D-erythro-sphingosine (Sph) or N,N-dimethyl-D-erythrosphingosine (DMS) or N,N,N-trimethyl-D-erythrosphingosine (TMS), but not by ceramide or Sph-1-P and is strongly inhibited by phosphatidylserine. Inhibited by PRKCH upstream open reading frame 2. Calcium-independent, phospholipid- and diacylglycerol (DAG)-dependent serine/threonine-protein kinase that plays contrasting roles in cell death and cell survival by functioning as a pro-apoptotic protein during DNA damage-induced apoptosis, but acting as an anti-apoptotic protein during cytokine receptor-initiated cell death, is involved in tumor suppression as well as survival of several cancers, is required for oxygen radical production by NADPH oxidase and acts as positive or negative regulator in platelet functional responses. Negatively regulates B cell proliferation and also has an important function in self-antigen induced B cell tolerance induction. Upon DNA damage, activates the promoter of the death-promoting transcription factor BCLAF1/Btf to trigger BCLAF1-mediated p53/TP53 gene transcription and apoptosis. In response to oxidative stress, interact with and activate CHUK/IKKA in the nucleus, causing the phosphorylation of p53/TP53. In the case of ER stress or DNA damage-induced apoptosis, can form a complex with the tyrosine-protein kinase ABL1 which trigger apoptosis independently of p53/TP53. In cytosol can trigger apoptosis by activating MAPK11 or MAPK14, inhibiting AKT1 and decreasing the level of X-linked inhibitor of apoptosis protein (XIAP), whereas in nucleus induces apoptosis via the activation of MAPK8 or MAPK9. Upon ionizing radiation treatment, is required for the activation of the apoptosis regulators BAX and BAK, which trigger the mitochondrial cell death pathway. Can phosphorylate MCL1 and target it for degradation which is sufficient to trigger for BAX activation and apoptosis. Is required for the control of cell cycle progression both at G1/S and G2/M phases. Mediates phorbol 12-myristate 13-acetate (PMA)-induced inhibition of cell cycle progression at G1/S phase by up-regulating the CDK inhibitor CDKN1A/p21 and inhibiting the cyclin CCNA2 promoter activity. In response to UV irradiation can phosphorylate CDK1, which is important for the G2/M DNA damage checkpoint activation. Can protect glioma cells from the apoptosis induced by TNFSF10/TRAIL, probably by inducing increased phosphorylation and subsequent activation of AKT1. Is highly expressed in a number of cancer cells and promotes cell survival and resistance against chemotherapeutic drugs by inducing cyclin D1 (CCND1) and hyperphosphorylation of RB1, and via several pro-survival pathways, including NF-kappa-B, AKT1 and MAPK1/3 (ERK1/2). Involved in antifungal immunity by mediating phosphorylation and activation of CARD9 downstream of C-type lectin receptors activation, promoting interaction between CARD9 and BCL10, followed by activation of NF-kappa-B and MAP kinase p38 pathways. Can also act as tumor suppressor upon mitogenic stimulation with PMA or TPA. In N-formyl-methionyl-leucyl-phenylalanine (fMLP)-treated cells, is required for NCF1 (p47-phox) phosphorylation and activation of NADPH oxidase activity, and regulates TNF-elicited superoxide anion production in neutrophils, by direct phosphorylation and activation of NCF1 or indirectly through MAPK1/3 (ERK1/2) signaling pathways. May also play a role in the regulation of NADPH oxidase activity in eosinophil after stimulation with IL5, leukotriene B4 or PMA. In collagen-induced platelet aggregation, acts a negative regulator of filopodia formation and actin polymerization by interacting with and negatively regulating VASP phosphorylation. Downstream of PAR1, PAR4 and CD36/GP4 receptors, regulates differentially platelet dense granule secretion; acts as a positive regulator in PAR-mediated granule secretion, whereas it negatively regulates CD36/GP4-mediated granule release. Phosphorylates MUC1 in the C-terminal and regulates the interaction between MUC1 and beta-catenin. The catalytic subunit phosphorylates 14-3-3 proteins (YWHAB, YWHAZ and YWHAH) in a sphingosine-dependent fashion. Phosphorylates ELAVL1 in response to angiotensin-2 treatment. Phosphorylates mitochondrial phospholipid scramblase 3 (PLSCR3), resulting in increased cardiolipin expression on the mitochondrial outer membrane which facilitates apoptosis. Phosphorylates SMPD1 which induces SMPD1 secretion. The sequence is that of Protein kinase C delta type from Homo sapiens (Human).